Here is a 199-residue protein sequence, read N- to C-terminus: Golgi to ER traffic protein 1 (199 aa).

Over 1 to 11 (MLLPDLHPYTI) the chain is Lumenal. The chain crosses the membrane as a helical span at residues 12–31 (LLSIFIVLLLKQLVASIGKS). Over 32-115 (TIKEFVWLVY…SIDKVSNALL (84 aa)) the chain is Cytoplasmic. Positions 66-116 (EKRAISAQDEYAKWTKLNRQADKLSAELQKLNQEIQQQKASIDKVSNALLL) form a coiled coil. Residues 116–136 (LVLTTLPIWVARVLYRNTHLF) traverse the membrane as a helical segment. Residues 137–160 (YIRQGIFPKYVEWVLALPFLPNGA) lie on the Lumenal side of the membrane. A helical membrane pass occupies residues 161–177 (VGLTIWMFAVNSVVSNF). The Cytoplasmic portion of the chain corresponds to 178–199 (AFLVSFPFAKKVSKPVRDTKIE).

Belongs to the WRB/GET1 family. As to quaternary structure, component of the Golgi to ER traffic (GET) complex, which is composed of GET1, GET2 and GET3. Within the complex, GET1 and GET2 form a heterotetramer which is stabilized by phosphatidylinositol binding and which binds to the GET3 homodimer.

Its subcellular location is the endoplasmic reticulum membrane. It localises to the golgi apparatus membrane. In terms of biological role, required for the post-translational delivery of tail-anchored (TA) proteins to the endoplasmic reticulum. Together with GET2, acts as a membrane receptor for soluble GET3, which recognizes and selectively binds the transmembrane domain of TA proteins in the cytosol. The GET complex cooperates with the HDEL receptor ERD2 to mediate the ATP-dependent retrieval of resident ER proteins that contain a C-terminal H-D-E-L retention signal from the Golgi to the ER. The polypeptide is Golgi to ER traffic protein 1 (Candida dubliniensis (strain CD36 / ATCC MYA-646 / CBS 7987 / NCPF 3949 / NRRL Y-17841) (Yeast)).